Reading from the N-terminus, the 356-residue chain is Homoserine O-acetyltransferase (356 aa).

The AB hydrolase-1 domain occupies 50–335 (NVILVCHALT…DEPYGHDAFL (286 aa)). Residue S146 is the Nucleophile of the active site. Substrate is bound at residue R215. Residues D302 and H331 contribute to the active site. Residue D332 participates in substrate binding.

It belongs to the AB hydrolase superfamily. MetX family. Homodimer.

Its subcellular location is the cytoplasm. It carries out the reaction L-homoserine + acetyl-CoA = O-acetyl-L-homoserine + CoA. It participates in amino-acid biosynthesis; L-methionine biosynthesis via de novo pathway; O-acetyl-L-homoserine from L-homoserine: step 1/1. In terms of biological role, transfers an acetyl group from acetyl-CoA to L-homoserine, forming acetyl-L-homoserine. The sequence is that of Homoserine O-acetyltransferase from Chlorobaculum parvum (strain DSM 263 / NCIMB 8327) (Chlorobium vibrioforme subsp. thiosulfatophilum).